The primary structure comprises 201 residues: Probable molybdenum cofactor guanylyltransferase (201 aa).

GTP is bound by residues 20–22 (LAG), K32, D77, and D106. D106 contacts Mg(2+).

This sequence belongs to the MobA family. Mg(2+) is required as a cofactor.

Its subcellular location is the cytoplasm. It carries out the reaction Mo-molybdopterin + GTP + H(+) = Mo-molybdopterin guanine dinucleotide + diphosphate. Functionally, transfers a GMP moiety from GTP to Mo-molybdopterin (Mo-MPT) cofactor (Moco or molybdenum cofactor) to form Mo-molybdopterin guanine dinucleotide (Mo-MGD) cofactor. In Aquifex aeolicus (strain VF5), this protein is Probable molybdenum cofactor guanylyltransferase.